The sequence spans 1751 residues: Non-reducing polyketide synthase afvB (1751 aa).

The interval 19 to 249 is N-terminal acylcarrier protein transacylase domain (SAT); that stretch reads FRRLRLHSKC…PLPVYGGPCH (231 aa). The Ketosynthase family 3 (KS3) domain maps to 381–811; that stretch reads HEKIAVIGMS…GGNTSLLLEE (431 aa). Active-site for beta-ketoacyl synthase activity residues include Cys-554, His-689, and His-730. A malonyl-CoA:ACP transacylase (MAT) domain region spans residues 910-1228; the sequence is FVFSGQGSFS…SMSALHSAGV (319 aa). The tract at residues 1291–1607 is product template (PT) domain; sequence TALVHHILEE…PRILMSRFFD (317 aa). The interval 1295-1429 is N-terminal hotdog fold; it reads HHILEESFGK…GVVTCGDSHS (135 aa). Residues 1295–1603 enclose the PKS/mFAS DH domain; sequence HHILEESFGK…LRPLPRILMS (309 aa). His-1327 functions as the Proton acceptor; for dehydratase activity in the catalytic mechanism. Residues 1456-1603 are C-terminal hotdog fold; the sequence is LASRVSKDLV…LRPLPRILMS (148 aa). Asp-1514 (proton donor; for dehydratase activity) is an active-site residue. The tract at residues 1610–1670 is disordered; sequence DSQYGQMAQQ…KAPISGSWPN (61 aa). A compositionally biased stretch (polar residues) spans 1612–1657; that stretch reads QYGQMAQQEPSTALPSTPQHTSSAKTTESTPSQQDESDNTSLATPE. A Carrier domain is found at 1670-1747; the sequence is NANSQLVRDA…DLKAYLEGNQ (78 aa). Ser-1707 bears the O-(pantetheine 4'-phosphoryl)serine mark.

The cofactor is pantetheine 4'-phosphate. In terms of tissue distribution, expressed mainly in sclerotia, with expression levels 20-fold and 10-fold greater than the expression levels of this gene found in mycelium and conidia, respectively.

It functions in the pathway secondary metabolite biosynthesis. Its function is as follows. Non-reducing polyketide synthase (NRPKS); part of the gene cluster that mediates the biosynthesis of aflavarin, a bicoumarin that exhibits anti-insectan activity against the fungivorous beetle C.hemipterus. Catalyzes the formation of the aromatic polyketide from acetyl coenzyme A and seven malonyl coenzyme A molecules. The sequence is that of Non-reducing polyketide synthase afvB from Aspergillus flavus (strain ATCC 200026 / FGSC A1120 / IAM 13836 / NRRL 3357 / JCM 12722 / SRRC 167).